A 101-amino-acid polypeptide reads, in one-letter code: Small ribosomal subunit protein bS18c (101 aa).

Residues 1 to 19 (MDKSKQPFRKSKRSFRRRL) show a composition bias toward basic residues. Positions 1–24 (MDKSKQPFRKSKRSFRRRLPPIGS) are disordered.

Belongs to the bacterial ribosomal protein bS18 family. In terms of assembly, part of the 30S ribosomal subunit.

The protein localises to the plastid. Its subcellular location is the chloroplast. The chain is Small ribosomal subunit protein bS18c from Amborella trichopoda.